The chain runs to 56 residues: MAVQQNKKSRSKRGMRRSHDSLSTAQLSVDATSGELHLRHNVTADGFYRGKKVINK.

A disordered region spans residues 1–34; that stretch reads MAVQQNKKSRSKRGMRRSHDSLSTAQLSVDATSG. The segment covering 7-16 has biased composition (basic residues); the sequence is KKSRSKRGMR. Polar residues predominate over residues 21-31; it reads SLSTAQLSVDA.

This sequence belongs to the bacterial ribosomal protein bL32 family.

The chain is Large ribosomal subunit protein bL32 from Shewanella frigidimarina (strain NCIMB 400).